Here is a 290-residue protein sequence, read N- to C-terminus: Sodium/potassium-transporting ATPase subunit beta-2 (290 aa).

Residues 1–39 (MVIQKEKKSCGQVVEEWKEFVWNPRTHQFMGRTGTSWAF) are Cytoplasmic-facing. A helical; Signal-anchor for type II membrane protein membrane pass occupies residues 40 to 67 (ILLFYLVFYGFLTAMFTLTMWVMLQTVS). The Extracellular portion of the chain corresponds to 68 to 290 (EHTPKYQDRL…VAFKLRINKT (223 aa)). Asparagine 96 and asparagine 118 each carry an N-linked (GlcNAc...) asparagine glycan. An intrachain disulfide couples cysteine 129 to cysteine 150. N-linked (GlcNAc...) asparagine glycosylation is found at asparagine 153 and asparagine 159. Cysteine 160 and cysteine 177 are oxidised to a cystine. Residues asparagine 193, asparagine 197, and asparagine 238 are each glycosylated (N-linked (GlcNAc...) asparagine). The segment at 193–290 (NQSMNVTCAG…VAFKLRINKT (98 aa)) is immunoglobulin-like. Cysteine 200 and cysteine 261 are joined by a disulfide.

It belongs to the X(+)/potassium ATPases subunit beta family. In terms of assembly, the sodium/potassium-transporting ATPase is composed of a catalytic alpha subunit, an auxiliary non-catalytic beta subunit and an additional regulatory subunit. Interacts with BSG.

The protein resides in the cell membrane. This is the non-catalytic component of the active enzyme, which catalyzes the hydrolysis of ATP coupled with the exchange of Na(+) and K(+) ions across the plasma membrane. The exact function of the beta-2 subunit is not known. Functionally, mediates cell adhesion of neurons and astrocytes, and promotes neurite outgrowth. The sequence is that of Sodium/potassium-transporting ATPase subunit beta-2 (ATP1B2) from Oryctolagus cuniculus (Rabbit).